The sequence spans 92 residues: Small ribosomal subunit protein uS19 (92 aa).

This sequence belongs to the universal ribosomal protein uS19 family.

Functionally, protein S19 forms a complex with S13 that binds strongly to the 16S ribosomal RNA. The protein is Small ribosomal subunit protein uS19 of Aliivibrio salmonicida (strain LFI1238) (Vibrio salmonicida (strain LFI1238)).